The chain runs to 251 residues: 3-deoxy-manno-octulosonate cytidylyltransferase (251 aa).

Belongs to the KdsB family.

It is found in the cytoplasm. It carries out the reaction 3-deoxy-alpha-D-manno-oct-2-ulosonate + CTP = CMP-3-deoxy-beta-D-manno-octulosonate + diphosphate. It functions in the pathway nucleotide-sugar biosynthesis; CMP-3-deoxy-D-manno-octulosonate biosynthesis; CMP-3-deoxy-D-manno-octulosonate from 3-deoxy-D-manno-octulosonate and CTP: step 1/1. Its pathway is bacterial outer membrane biogenesis; lipopolysaccharide biosynthesis. In terms of biological role, activates KDO (a required 8-carbon sugar) for incorporation into bacterial lipopolysaccharide in Gram-negative bacteria. This chain is 3-deoxy-manno-octulosonate cytidylyltransferase, found in Brucella canis (strain ATCC 23365 / NCTC 10854 / RM-666).